A 679-amino-acid polypeptide reads, in one-letter code: Glycine--tRNA ligase beta subunit (679 aa).

Belongs to the class-II aminoacyl-tRNA synthetase family. Tetramer of two alpha and two beta subunits.

It localises to the cytoplasm. The enzyme catalyses tRNA(Gly) + glycine + ATP = glycyl-tRNA(Gly) + AMP + diphosphate. This chain is Glycine--tRNA ligase beta subunit, found in Streptococcus equi subsp. zooepidemicus (strain H70).